The primary structure comprises 88 residues: Small ribosomal subunit protein bS16 (88 aa).

The protein belongs to the bacterial ribosomal protein bS16 family.

The sequence is that of Small ribosomal subunit protein bS16 from Pelotomaculum thermopropionicum (strain DSM 13744 / JCM 10971 / SI).